The primary structure comprises 62 residues: Small ribosomal subunit protein bS21 (62 aa).

The tract at residues Tyr38–Gly62 is disordered.

It belongs to the bacterial ribosomal protein bS21 family.

The chain is Small ribosomal subunit protein bS21 from Gemmatimonas aurantiaca (strain DSM 14586 / JCM 11422 / NBRC 100505 / T-27).